The chain runs to 432 residues: 3-phosphoshikimate 1-carboxyvinyltransferase (432 aa).

Residues K23, S24, and R28 each coordinate 3-phosphoshikimate. Position 23 (K23) interacts with phosphoenolpyruvate. Phosphoenolpyruvate contacts are provided by G95 and R123. S167, Q169, D317, and K344 together coordinate 3-phosphoshikimate. Q169 is a phosphoenolpyruvate binding site. The active-site Proton acceptor is D317. 2 residues coordinate phosphoenolpyruvate: R348 and R390.

It belongs to the EPSP synthase family. In terms of assembly, monomer.

The protein resides in the cytoplasm. The catalysed reaction is 3-phosphoshikimate + phosphoenolpyruvate = 5-O-(1-carboxyvinyl)-3-phosphoshikimate + phosphate. Its pathway is metabolic intermediate biosynthesis; chorismate biosynthesis; chorismate from D-erythrose 4-phosphate and phosphoenolpyruvate: step 6/7. In terms of biological role, catalyzes the transfer of the enolpyruvyl moiety of phosphoenolpyruvate (PEP) to the 5-hydroxyl of shikimate-3-phosphate (S3P) to produce enolpyruvyl shikimate-3-phosphate and inorganic phosphate. The protein is 3-phosphoshikimate 1-carboxyvinyltransferase of Staphylococcus haemolyticus (strain JCSC1435).